We begin with the raw amino-acid sequence, 378 residues long: Ribosomal RNA large subunit methyltransferase G (378 aa).

This sequence belongs to the methyltransferase superfamily. RlmG family.

The protein localises to the cytoplasm. The catalysed reaction is guanosine(1835) in 23S rRNA + S-adenosyl-L-methionine = N(2)-methylguanosine(1835) in 23S rRNA + S-adenosyl-L-homocysteine + H(+). Its function is as follows. Specifically methylates the guanine in position 1835 (m2G1835) of 23S rRNA. The polypeptide is Ribosomal RNA large subunit methyltransferase G (Enterobacter sp. (strain 638)).